Consider the following 244-residue polypeptide: MSAVEISPDVLVYKSPLTEQSTEYASISNNSDQTIAFKVKTTAPKFYCVRPNAAVVAPGETIQVQVIFLGLTEEPAADFKCRDKFLVITLPSPYDLNGKAVADVWSDLEAEFKQQAISKKIKVKYLISPDVHPAQNQNIQENKETVEPVVQDSEPKEVPAVVNEKEVPAEPETQPPVQVKKEEVPPVVQKTVPHENEKQTSNSTPAPQNQIKEAATVPAENESSSMGIFILVALLILVLGWFYR.

An N-acetylserine modification is found at Ser2. Topologically, residues 2–222 are cytoplasmic; the sequence is SAVEISPDVL…EAATVPAENE (221 aa). In terms of domain architecture, MSP spans 3–126; it reads AVEISPDVLV…ISKKIKVKYL (124 aa). Ser106 carries the post-translational modification Phosphoserine. The interval 135-219 is disordered; the sequence is QNQNIQENKE…QIKEAATVPA (85 aa). The span at 153-168 shows a compositional bias: basic and acidic residues; it reads SEPKEVPAVVNEKEVP. Positions 199–211 are enriched in polar residues; the sequence is QTSNSTPAPQNQI. A helical; Anchor for type IV membrane protein membrane pass occupies residues 223 to 243; sequence SSSMGIFILVALLILVLGWFY. A topological domain (lumenal) is located at residue Arg244.

This sequence belongs to the VAMP-associated protein (VAP) (TC 9.B.17) family. As to quaternary structure, interacts with OPI1. Also interacts with PBI1. Interacts with EPO1.

The protein localises to the endoplasmic reticulum membrane. The protein resides in the nucleus membrane. Its function is as follows. Acts as an endoplasmic reticulum (ER) membrane anchor for cytoplasmic proteins via binding to the FFAT motif of targeted proteins. Regulates phospholipid biosynthesis by modulating the subcellular localization of the transcriptional repressor OPI1. Also contributes to the tethering of the ER to the plasma membrane. Allows interorganelle phosphatidylserine (PtdSer) transport via a process that involves the acceptor membrane complex PDR17-PDS2 that binds to PBI1 which in turn ligates to SCS2 and phosphatidic acid present in the donor membrane, forming a zone of apposition that facilitates PtdSer transfer. This chain is Vesicle-associated membrane protein-associated protein SCS2, found in Saccharomyces cerevisiae (strain ATCC 204508 / S288c) (Baker's yeast).